The sequence spans 78 residues: Large ribosomal subunit protein bL28 (78 aa).

It belongs to the bacterial ribosomal protein bL28 family.

This is Large ribosomal subunit protein bL28 from Synechococcus sp. (strain JA-2-3B'a(2-13)) (Cyanobacteria bacterium Yellowstone B-Prime).